The following is a 39-amino-acid chain: Photosystem II reaction center protein L (39 aa).

A helical membrane pass occupies residues 18–38 (SLYLGLLSVFVLGILFSSYFF).

This sequence belongs to the PsbL family. PSII is composed of 1 copy each of membrane proteins PsbA, PsbB, PsbC, PsbD, PsbE, PsbF, PsbH, PsbI, PsbJ, PsbK, PsbL, PsbM, PsbT, PsbX, PsbY, Psb30/Ycf12, peripheral proteins PsbO, CyanoQ (PsbQ), PsbU, PsbV and a large number of cofactors. It forms dimeric complexes.

The protein resides in the cellular thylakoid membrane. Functionally, one of the components of the core complex of photosystem II (PSII). PSII is a light-driven water:plastoquinone oxidoreductase that uses light energy to abstract electrons from H(2)O, generating O(2) and a proton gradient subsequently used for ATP formation. It consists of a core antenna complex that captures photons, and an electron transfer chain that converts photonic excitation into a charge separation. This subunit is found at the monomer-monomer interface and is required for correct PSII assembly and/or dimerization. In Prochlorococcus marinus (strain MIT 9301), this protein is Photosystem II reaction center protein L.